The primary structure comprises 294 residues: Indole-3-glycerol phosphate synthase (294 aa).

Belongs to the TrpC family.

It carries out the reaction 1-(2-carboxyphenylamino)-1-deoxy-D-ribulose 5-phosphate + H(+) = (1S,2R)-1-C-(indol-3-yl)glycerol 3-phosphate + CO2 + H2O. It participates in amino-acid biosynthesis; L-tryptophan biosynthesis; L-tryptophan from chorismate: step 4/5. This is Indole-3-glycerol phosphate synthase from Parasynechococcus marenigrum (strain WH8102).